Consider the following 1654-residue polypeptide: Microtubule cross-linking factor 2 (1654 aa).

Positions 1-188 (METPAGESSA…VAASSVGSSR (188 aa)) are disordered. Residues 55-66 (GSATACGTASSA) show a composition bias toward low complexity. The segment covering 102–113 (GTGPRPPPPPPS) has biased composition (pro residues). The segment covering 132–147 (LGLELALSSDAESAAG) has biased composition (low complexity). Positions 209–238 (PGGLVRELEELRSENDYLKDEIEELRAEML) are required for association with Golgi apparatus membrane. Coiled coils occupy residues 216 to 279 (LEEL…AERR), 308 to 349 (SMRL…LQTE), 448 to 546 (LKLV…YRSE), 816 to 843 (IKDL…ERQL), and 1079 to 1113 (SQEK…LQKA). The tract at residues 348 to 379 (TELDRPREHSLKKRGTRSLGKTDKKPTAQEDS) is disordered. Residues 1122–1145 (SDMEKQDNSWKEARSEKTHDKEGV) show a composition bias toward basic and acidic residues. The tract at residues 1122 to 1146 (SDMEKQDNSWKEARSEKTHDKEGVS) is disordered. Residues serine 1165 and serine 1251 each carry the phosphoserine modification. The interval 1406–1505 (LVSVRSKQIS…HSGSTESVWK (100 aa)) is KR-rich domain required for microtubules binding. Disordered stretches follow at residues 1427 to 1450 (RPCC…LDST), 1537 to 1560 (PTTA…YHQP), and 1627 to 1654 (NTIR…AAPQ). Basic residues predominate over residues 1628–1638 (TIRHSPSKCRL).

Belongs to the MTCL family. In terms of assembly, interacts with CLASP2. Interacts with CLASP1. The C-terminal SOGA 25 kDa form occurs as a monomer. Proteolytically cleaved into a C-terminal SOGA 25 kDa form that is detected in plasma. Proteolytically cleaved in primary hepatocytes into a C-terminal SOGA 80 kDa form. Post-translationally, phosphorylated during mitosis in a CDK1-dependent manner. In terms of tissue distribution, expressed in liver (at protein level).

It localises to the secreted. Its subcellular location is the cytoplasm. The protein resides in the cytoskeleton. It is found in the golgi apparatus membrane. The protein localises to the midbody. Microtubule-associated factor that enables integration of the centrosomal and Golgi-associated microtubules on the Golgi membrane, supporting directional migration. Preferentially acts on the perinuclear microtubules accumulated around the Golgi. Associates with the Golgi membrane through the N-terminal coiled-coil region and directly binds microtubules through the C-terminal domain. Required for faithful chromosome segregation during mitosis. Regulates autophagy by playing a role in the reduction of glucose production in an adiponectin- and insulin-dependent manner. In Mus musculus (Mouse), this protein is Microtubule cross-linking factor 2 (Mtcl2).